The primary structure comprises 230 residues: MKEERPIIALDFSSFEETKAFLDLFPAEEKLYVKIGMELYYAQGPDIVRYIKSLGHNVFLDLKLHDIPNTVRAAMAVLKELDIDMATVHAAGGVEMLKAAREGLGQGPTLIAVTQLTSTSEDQMRGDQNIQTSLLESVLHYSKGAAKAQLDGAVCSAQEVEAIKAVTPTGFTCLTPGIRPKGSNIGDQKRVMTPNQARRIGSDYIVVGRPITQAKDPVAAYQAIKAEWAG.

Residues Asp11, Lys34, 61–70 (DLKLHDIPNT), Thr117, Arg179, Gln188, Gly208, and Arg209 contribute to the substrate site. Lys63 (proton donor) is an active-site residue.

Belongs to the OMP decarboxylase family. Type 1 subfamily. As to quaternary structure, homodimer.

The catalysed reaction is orotidine 5'-phosphate + H(+) = UMP + CO2. Its pathway is pyrimidine metabolism; UMP biosynthesis via de novo pathway; UMP from orotate: step 2/2. Catalyzes the decarboxylation of orotidine 5'-monophosphate (OMP) to uridine 5'-monophosphate (UMP). The chain is Orotidine 5'-phosphate decarboxylase from Streptococcus pyogenes serotype M1.